The chain runs to 648 residues: Biosynthetic arginine decarboxylase (648 aa).

An N6-(pyridoxal phosphate)lysine modification is found at Lys-109. 291 to 301 contacts substrate; sequence LDVGGGLGVDY.

This sequence belongs to the Orn/Lys/Arg decarboxylase class-II family. SpeA subfamily. Requires Mg(2+) as cofactor. Pyridoxal 5'-phosphate is required as a cofactor.

The catalysed reaction is L-arginine + H(+) = agmatine + CO2. It participates in amine and polyamine biosynthesis; agmatine biosynthesis; agmatine from L-arginine: step 1/1. Catalyzes the biosynthesis of agmatine from arginine. The protein is Biosynthetic arginine decarboxylase of Prochlorococcus marinus (strain MIT 9303).